We begin with the raw amino-acid sequence, 514 residues long: CBL-interacting protein kinase 25 (514 aa).

The Protein kinase domain occupies 21-281; sequence YEFGPLVGEG…IPEIMEMRWF (261 aa). Residues 27 to 35 and Lys-50 each bind ATP; that span reads VGEGNFAKV. Asp-149 (proton acceptor) is an active-site residue. The activation loop stretch occupies residues 167 to 196; that stretch reads DFGLSALADMERREAHLQTVCGTPLFLAPE. Residues 303–340 form a disordered region; the sequence is GLDGEPELYDSDTDTIESSSSSESPTPVAGTPRGMHTS. The segment covering 304-317 has biased composition (acidic residues); that stretch reads LDGEPELYDSDTDT. The span at 318–329 shows a compositional bias: low complexity; it reads IESSSSSESPTP. The region spanning 323 to 395 is the NAF domain; sequence SSESPTPVAG…PSFDLSGLFE (73 aa). The tract at residues 398–427 is PPI; the sequence is GERMRFVSGAPVADIIAKLQEIAGMVSFTA.

Belongs to the protein kinase superfamily. CAMK Ser/Thr protein kinase family. SNF1 subfamily. Mn(2+) serves as cofactor.

It carries out the reaction L-seryl-[protein] + ATP = O-phospho-L-seryl-[protein] + ADP + H(+). The catalysed reaction is L-threonyl-[protein] + ATP = O-phospho-L-threonyl-[protein] + ADP + H(+). In terms of biological role, CIPK serine-threonine protein kinases interact with CBL proteins. Binding of a CBL protein to the regulatory NAF domain of CIPK protein lead to the activation of the kinase in a calcium-dependent manner. The polypeptide is CBL-interacting protein kinase 25 (CIPK25) (Oryza sativa subsp. japonica (Rice)).